The sequence spans 109 residues: Large ribosomal subunit protein uL24 (109 aa).

The protein belongs to the universal ribosomal protein uL24 family. As to quaternary structure, part of the 50S ribosomal subunit.

Its function is as follows. One of two assembly initiator proteins, it binds directly to the 5'-end of the 23S rRNA, where it nucleates assembly of the 50S subunit. Functionally, one of the proteins that surrounds the polypeptide exit tunnel on the outside of the subunit. The sequence is that of Large ribosomal subunit protein uL24 from Ehrlichia canis (strain Jake).